The sequence spans 225 residues: PKHD-type hydroxylase YbiX (225 aa).

A Fe2OG dioxygenase domain is found at 78–177; sequence TLSTPLFNRY…RVASFMWIQS (100 aa). H96, D98, and H158 together coordinate Fe cation. Position 168 (R168) interacts with 2-oxoglutarate.

Requires Fe(2+) as cofactor. The cofactor is L-ascorbate.

This is PKHD-type hydroxylase YbiX from Escherichia coli O6:H1 (strain CFT073 / ATCC 700928 / UPEC).